The sequence spans 476 residues: Siroheme synthase (476 aa).

Positions 1–204 (MDYFPVFLNI…GKDQAAQDYL (204 aa)) are precorrin-2 dehydrogenase /sirohydrochlorin ferrochelatase. Residues 22–23 (SV) and 43–44 (PT) each bind NAD(+). The residue at position 129 (S129) is a Phosphoserine. The tract at residues 218–476 (GEVYLVGAGP…GNTPGYSKHP (259 aa)) is uroporphyrinogen-III C-methyltransferase. An S-adenosyl-L-methionine-binding site is contributed by P227. D250 functions as the Proton acceptor in the catalytic mechanism. The Proton donor role is filled by K272. Residues 303-305 (GGD), I308, 333-334 (TA), M385, and G414 contribute to the S-adenosyl-L-methionine site.

It in the N-terminal section; belongs to the precorrin-2 dehydrogenase / sirohydrochlorin ferrochelatase family. The protein in the C-terminal section; belongs to the precorrin methyltransferase family.

The catalysed reaction is uroporphyrinogen III + 2 S-adenosyl-L-methionine = precorrin-2 + 2 S-adenosyl-L-homocysteine + H(+). It catalyses the reaction precorrin-2 + NAD(+) = sirohydrochlorin + NADH + 2 H(+). The enzyme catalyses siroheme + 2 H(+) = sirohydrochlorin + Fe(2+). The protein operates within cofactor biosynthesis; adenosylcobalamin biosynthesis; precorrin-2 from uroporphyrinogen III: step 1/1. It functions in the pathway cofactor biosynthesis; adenosylcobalamin biosynthesis; sirohydrochlorin from precorrin-2: step 1/1. Its pathway is porphyrin-containing compound metabolism; siroheme biosynthesis; precorrin-2 from uroporphyrinogen III: step 1/1. It participates in porphyrin-containing compound metabolism; siroheme biosynthesis; siroheme from sirohydrochlorin: step 1/1. The protein operates within porphyrin-containing compound metabolism; siroheme biosynthesis; sirohydrochlorin from precorrin-2: step 1/1. In terms of biological role, multifunctional enzyme that catalyzes the SAM-dependent methylations of uroporphyrinogen III at position C-2 and C-7 to form precorrin-2 via precorrin-1. Then it catalyzes the NAD-dependent ring dehydrogenation of precorrin-2 to yield sirohydrochlorin. Finally, it catalyzes the ferrochelation of sirohydrochlorin to yield siroheme. This chain is Siroheme synthase, found in Nitrosomonas eutropha (strain DSM 101675 / C91 / Nm57).